A 235-amino-acid chain; its full sequence is Large ribosomal subunit protein uL1 (235 aa).

It belongs to the universal ribosomal protein uL1 family. Part of the 50S ribosomal subunit.

In terms of biological role, binds directly to 23S rRNA. The L1 stalk is quite mobile in the ribosome, and is involved in E site tRNA release. Protein L1 is also a translational repressor protein, it controls the translation of the L11 operon by binding to its mRNA. This Thermobifida fusca (strain YX) protein is Large ribosomal subunit protein uL1.